Here is a 285-residue protein sequence, read N- to C-terminus: Nucleotide-binding protein Cphy_0331 (285 aa).

Glycine 8–serine 15 is an ATP binding site. Aspartate 59–serine 62 contributes to the GTP binding site.

This sequence belongs to the RapZ-like family.

In terms of biological role, displays ATPase and GTPase activities. The sequence is that of Nucleotide-binding protein Cphy_0331 from Lachnoclostridium phytofermentans (strain ATCC 700394 / DSM 18823 / ISDg) (Clostridium phytofermentans).